A 119-amino-acid chain; its full sequence is Ribonuclease (119 aa).

Residues lysine 6 and arginine 9 each coordinate substrate. The active-site Proton acceptor is histidine 11. Disulfide bonds link cysteine 26-cysteine 81, cysteine 40-cysteine 92, and cysteine 58-cysteine 107. Substrate is bound by residues 41 to 45 (KFTNT) and arginine 82. Histidine 114 acts as the Proton donor in catalysis.

This sequence belongs to the pancreatic ribonuclease family. In terms of assembly, monomer. Interacts with and forms tight 1:1 complexes with RNH1. Dimerization of two such complexes may occur. Interaction with RNH1 inhibits this protein. As to expression, pancreas.

It is found in the secreted. It carries out the reaction an [RNA] containing cytidine + H2O = an [RNA]-3'-cytidine-3'-phosphate + a 5'-hydroxy-ribonucleotide-3'-[RNA].. It catalyses the reaction an [RNA] containing uridine + H2O = an [RNA]-3'-uridine-3'-phosphate + a 5'-hydroxy-ribonucleotide-3'-[RNA].. Endonuclease that catalyzes the cleavage of RNA on the 3' side of pyrimidine nucleotides. Acts on single-stranded and double-stranded RNA. This chain is Ribonuclease, found in Chelydra serpentina (Snapping turtle).